The sequence spans 346 residues: Elongation factor Ts (346 aa).

The segment at 80 to 83 (TDFV) is involved in Mg(2+) ion dislocation from EF-Tu.

Belongs to the EF-Ts family.

It localises to the cytoplasm. Associates with the EF-Tu.GDP complex and induces the exchange of GDP to GTP. It remains bound to the aminoacyl-tRNA.EF-Tu.GTP complex up to the GTP hydrolysis stage on the ribosome. This Streptococcus pneumoniae serotype 19F (strain G54) protein is Elongation factor Ts.